A 31-amino-acid chain; its full sequence is uncharacterized protein (31 aa).

This is an uncharacterized protein from Caenorhabditis elegans.